The chain runs to 518 residues: 3-octaprenyl-4-hydroxybenzoate carboxy-lyase (518 aa).

Residue Asn177 coordinates Mn(2+). Residues 180-182 (IYR), 194-196 (RWL), and 199-200 (RG) each bind prenylated FMN. Glu243 serves as a coordination point for Mn(2+). The Proton donor role is filled by Asp318.

It belongs to the UbiD family. As to quaternary structure, homohexamer. Requires prenylated FMN as cofactor. It depends on Mn(2+) as a cofactor.

It is found in the cell membrane. The catalysed reaction is a 4-hydroxy-3-(all-trans-polyprenyl)benzoate + H(+) = a 2-(all-trans-polyprenyl)phenol + CO2. Its pathway is cofactor biosynthesis; ubiquinone biosynthesis. Functionally, catalyzes the decarboxylation of 3-octaprenyl-4-hydroxy benzoate to 2-octaprenylphenol, an intermediate step in ubiquinone biosynthesis. This is 3-octaprenyl-4-hydroxybenzoate carboxy-lyase from Burkholderia orbicola (strain AU 1054).